The primary structure comprises 395 residues: Capsid protein (395 aa).

Over residues methionine 1–isoleucine 41 the composition is skewed to basic residues. Residues methionine 1–methionine 51 form a disordered region. The Nuclear localization signal signature appears at alanine 2 to serine 9.

Its subcellular location is the host nucleus. It localises to the virion. Self-assembles to form the virion icosahedral capsid. This is Capsid protein from Chaetoceros setoense (Chaetoceros setoense DNA virus).